A 60-amino-acid chain; its full sequence is Metallothionein A (60 aa).

Positions M1–C28 are beta. A divalent metal cation-binding residues include C4, C6, C12, C14, C18, C20, C23, C25, C28, C32, C33, C35, C36, C40, C43, C47, C49, C54, C58, and C59. The tract at residues K29 to Q60 is alpha.

Belongs to the metallothionein superfamily. Type 1 family.

Metallothioneins have a high content of cysteine residues that bind various heavy metals. The polypeptide is Metallothionein A (mta) (Chaenocephalus aceratus (Blackfin icefish)).